The following is a 150-amino-acid chain: Multiprotein-bridging factor 1 (150 aa).

Residues 36–71 (SSESKGAGQSKGPADHQRIAKLDRDDAPKPPEKVSA) are disordered. The span at 48-70 (PADHQRIAKLDRDDAPKPPEKVS) shows a compositional bias: basic and acidic residues. The HTH cro/C1-type domain occupies 84–137 (IKNAEGKSMTQKELATSVNAKPQDIADLESGRAVPDQALLGKLERKLNVKLRGA). The segment at residues 94–113 (QKELATSVNAKPQDIADLES) is a DNA-binding region (H-T-H motif).

This sequence belongs to the MBF1 family.

Transcriptional coactivator that stimulates GCN4-dependent transcriptional activity by bridging the DNA-binding region of GCN4 and TBP (SPT15), thereby recruiting TBP to GCN4-bound promoters. Involved in induction of the ribosome quality control (RQC) pathway; a pathway that degrades nascent peptide chains during problematic translation. Required to prevent stalled ribosomes from frameshifting. The sequence is that of Multiprotein-bridging factor 1 (MBF1) from Cryptococcus neoformans var. neoformans serotype D (strain B-3501A) (Filobasidiella neoformans).